The chain runs to 593 residues: Proline--tRNA ligase (593 aa).

The protein belongs to the class-II aminoacyl-tRNA synthetase family. ProS type 1 subfamily. Homodimer.

The protein resides in the cytoplasm. The catalysed reaction is tRNA(Pro) + L-proline + ATP = L-prolyl-tRNA(Pro) + AMP + diphosphate. Catalyzes the attachment of proline to tRNA(Pro) in a two-step reaction: proline is first activated by ATP to form Pro-AMP and then transferred to the acceptor end of tRNA(Pro). As ProRS can inadvertently accommodate and process non-cognate amino acids such as alanine and cysteine, to avoid such errors it has two additional distinct editing activities against alanine. One activity is designated as 'pretransfer' editing and involves the tRNA(Pro)-independent hydrolysis of activated Ala-AMP. The other activity is designated 'posttransfer' editing and involves deacylation of mischarged Ala-tRNA(Pro). The misacylated Cys-tRNA(Pro) is not edited by ProRS. In Parasynechococcus marenigrum (strain WH8102), this protein is Proline--tRNA ligase.